The following is a 164-amino-acid chain: Phosphopantetheine adenylyltransferase (164 aa).

Substrate is bound at residue serine 10. Residues 10–11 (SF) and histidine 18 contribute to the ATP site. Lysine 42, leucine 74, and arginine 88 together coordinate substrate. ATP is bound by residues 89 to 91 (GLR), glutamate 99, and 124 to 130 (YSFLSSS).

This sequence belongs to the bacterial CoaD family. As to quaternary structure, homohexamer. The cofactor is Mg(2+).

Its subcellular location is the cytoplasm. The catalysed reaction is (R)-4'-phosphopantetheine + ATP + H(+) = 3'-dephospho-CoA + diphosphate. The protein operates within cofactor biosynthesis; coenzyme A biosynthesis; CoA from (R)-pantothenate: step 4/5. In terms of biological role, reversibly transfers an adenylyl group from ATP to 4'-phosphopantetheine, yielding dephospho-CoA (dPCoA) and pyrophosphate. This is Phosphopantetheine adenylyltransferase from Bacillus licheniformis (strain ATCC 14580 / DSM 13 / JCM 2505 / CCUG 7422 / NBRC 12200 / NCIMB 9375 / NCTC 10341 / NRRL NRS-1264 / Gibson 46).